A 155-amino-acid chain; its full sequence is Transcriptional repressor NrdR (155 aa).

Residues 3–34 (CPFCHAEETKVVDSRLVADGAQVRRRRECLEC) fold into a zinc finger. The 91-residue stretch at 49-139 (PLIIKRDGRR…VYKRFKDVSD (91 aa)) folds into the ATP-cone domain.

It belongs to the NrdR family. Zn(2+) is required as a cofactor.

Its function is as follows. Negatively regulates transcription of bacterial ribonucleotide reductase nrd genes and operons by binding to NrdR-boxes. The sequence is that of Transcriptional repressor NrdR from Legionella pneumophila (strain Lens).